The sequence spans 115 residues: uncharacterized protein (115 aa).

This is an uncharacterized protein from Human herpesvirus 6A (strain Uganda-1102) (HHV-6 variant A).